The following is a 120-amino-acid chain: Large ribosomal subunit protein eL34z (120 aa).

Residues 31–51 are disordered; it reads VYQTTKKRASGPKCPVTGKRI.

This sequence belongs to the eukaryotic ribosomal protein eL34 family.

The protein is Large ribosomal subunit protein eL34z (RPL34A) of Arabidopsis thaliana (Mouse-ear cress).